Consider the following 88-residue polypeptide: Small ribosomal subunit protein uS15c (88 aa).

It belongs to the universal ribosomal protein uS15 family. In terms of assembly, part of the 30S ribosomal subunit.

Its subcellular location is the plastid. It is found in the chloroplast. This Lepidium virginicum (Virginia pepperweed) protein is Small ribosomal subunit protein uS15c (rps15).